A 179-amino-acid polypeptide reads, in one-letter code: Peptidyl-tRNA hydrolase (179 aa).

Residue Tyr14 participates in tRNA binding. The Proton acceptor role is filled by His19. TRNA is bound by residues Tyr61, Asn63, and Asn107.

Belongs to the PTH family. In terms of assembly, monomer.

It is found in the cytoplasm. The catalysed reaction is an N-acyl-L-alpha-aminoacyl-tRNA + H2O = an N-acyl-L-amino acid + a tRNA + H(+). In terms of biological role, hydrolyzes ribosome-free peptidyl-tRNAs (with 1 or more amino acids incorporated), which drop off the ribosome during protein synthesis, or as a result of ribosome stalling. Functionally, catalyzes the release of premature peptidyl moieties from peptidyl-tRNA molecules trapped in stalled 50S ribosomal subunits, and thus maintains levels of free tRNAs and 50S ribosomes. This chain is Peptidyl-tRNA hydrolase, found in Campylobacter lari (strain RM2100 / D67 / ATCC BAA-1060).